A 387-amino-acid chain; its full sequence is 3-ketoacyl-CoA thiolase (387 aa).

The active-site Acyl-thioester intermediate is Cys91. Active-site proton acceptor residues include His343 and Cys373.

It belongs to the thiolase-like superfamily. Thiolase family. Heterotetramer of two alpha chains (FadB) and two beta chains (FadA).

It is found in the cytoplasm. The enzyme catalyses an acyl-CoA + acetyl-CoA = a 3-oxoacyl-CoA + CoA. It functions in the pathway lipid metabolism; fatty acid beta-oxidation. Functionally, catalyzes the final step of fatty acid oxidation in which acetyl-CoA is released and the CoA ester of a fatty acid two carbons shorter is formed. The sequence is that of 3-ketoacyl-CoA thiolase from Escherichia coli O9:H4 (strain HS).